A 118-amino-acid polypeptide reads, in one-letter code: Putative membrane protein insertion efficiency factor (118 aa).

The segment at 76–118 (WDPVPQRRPRRRDAAAADAAMSAPHACKGSPHAVVGDTNDGST) is disordered. Low complexity predominate over residues 91 to 101 (AADAAMSAPHA).

The protein belongs to the UPF0161 family.

It localises to the cell membrane. Functionally, could be involved in insertion of integral membrane proteins into the membrane. The polypeptide is Putative membrane protein insertion efficiency factor (Nocardia farcinica (strain IFM 10152)).